The primary structure comprises 279 residues: uncharacterized protein (279 aa).

The interval arginine 60–asparagine 92 is disordered. The span at aspartate 70–isoleucine 85 shows a compositional bias: polar residues. The next 3 membrane-spanning stretches (helical) occupy residues isoleucine 156–asparagine 176, isoleucine 202–leucine 222, and phenylalanine 237–isoleucine 257.

It localises to the cell membrane. This is an uncharacterized protein from Mycoplasma genitalium (strain ATCC 33530 / DSM 19775 / NCTC 10195 / G37) (Mycoplasmoides genitalium).